The chain runs to 264 residues: Sec-independent protein translocase protein TatC (264 aa).

The next 6 helical transmembrane spans lie at valine 20–glutamate 40, phenylalanine 85–valine 105, alanine 131–leucine 151, phenylalanine 175–alanine 195, isoleucine 211–glycine 231, and valine 232–alanine 252.

It belongs to the TatC family. In terms of assembly, forms a complex with TatA.

It is found in the cell membrane. Part of the twin-arginine translocation (Tat) system that transports large folded proteins containing a characteristic twin-arginine motif in their signal peptide across membranes. This Cenarchaeum symbiosum (strain A) protein is Sec-independent protein translocase protein TatC.